The sequence spans 274 residues: Acetyl-coenzyme A carboxylase carboxyl transferase subunit alpha (274 aa).

One can recognise a CoA carboxyltransferase C-terminal domain in the interval 1–245 (MENSQELTPW…RENLKKAIEG (245 aa)).

It belongs to the AccA family. As to quaternary structure, acetyl-CoA carboxylase is a heterohexamer composed of biotin carboxyl carrier protein (AccB), biotin carboxylase (AccC) and two subunits each of ACCase subunit alpha (AccA) and ACCase subunit beta (AccD).

It is found in the cytoplasm. It catalyses the reaction N(6)-carboxybiotinyl-L-lysyl-[protein] + acetyl-CoA = N(6)-biotinyl-L-lysyl-[protein] + malonyl-CoA. The protein operates within lipid metabolism; malonyl-CoA biosynthesis; malonyl-CoA from acetyl-CoA: step 1/1. Functionally, component of the acetyl coenzyme A carboxylase (ACC) complex. First, biotin carboxylase catalyzes the carboxylation of biotin on its carrier protein (BCCP) and then the CO(2) group is transferred by the carboxyltransferase to acetyl-CoA to form malonyl-CoA. This is Acetyl-coenzyme A carboxylase carboxyl transferase subunit alpha from Clostridium acetobutylicum (strain ATCC 824 / DSM 792 / JCM 1419 / IAM 19013 / LMG 5710 / NBRC 13948 / NRRL B-527 / VKM B-1787 / 2291 / W).